Here is a 789-residue protein sequence, read N- to C-terminus: MSKLDMDTPEFSANEQELIDKEFTRLERNQSTYLDHAGTTLYAESQVAHAAVQLHHDVISNPHTSRSTGDYVDQVRFKILEFFHTQAEDYQVIFTANASAALRLVAEHFDFGDKGNFHYCQENHTSVLGMRQMIQANGTYMLRREELSELREGHRVRRVMANGSSSTGNSLVVFSAQCNFSGYKMPLETIQLIQDDGLPHFGKLIAGQEDKETNGTAYNYYVCLDAASYAATNPLDLQKYKPDFVCLSFYKIFGYPTGVGALLVSRRGAELLSRPRQFYGGGTINYAYAHAMDYKLRNTSLHERFEDGTLPFLSIVELLEGFRSLERLIPTNSNTGISTMDRVSRHVFTLARYLENQLKQLKYANGQPLIQFYNHQGYEQRSRQGGIVAFNVRTESGGYVGFAEIACVASLHGILLRTGCFCNVGACQRYLQLDDQMMDVIYKRSGRICGDYNDLIDGQPTGAVRVSFGYMTRTSDVRKLVEMLEKSYLSSRSPERWRFIEKQASQLPKALQQRAQSLRPRLLELAIFPVKSCAALKAKKWPLTAQGLKYDREWMIVDRNGLALTQKRCTDLCLIQPSIDKDNLILMFNGDTNSSISLPLFLSDDDLQAAARCRSKICRQPIEGSDCGDQVAQWLDQNLGLDGLRLLRQSTQRSSSSHQLSLVNQAQFLLVNRSSVRSLQFEEPLDETVDRFRANLIIDTGAPFDELDYTSLSIGRIHFKVEGPCQRCDMICINQRTGERSPETLTTISRLQKGKMRFGIYITRLTDKEDNAELNEEYHLICGETLEVD.

An N6-(pyridoxal phosphate)lysine modification is found at Lys251. Cys422 is an active-site residue. One can recognise an MOSC domain in the interval 628-789; sequence GDQVAQWLDQ…LICGETLEVD (162 aa). At Ser741 the chain carries Phosphoserine.

This sequence belongs to the class-V pyridoxal-phosphate-dependent aminotransferase family. MOCOS subfamily. The cofactor is pyridoxal 5'-phosphate.

The enzyme catalyses Mo-molybdopterin + L-cysteine + AH2 = thio-Mo-molybdopterin + L-alanine + A + H2O. The protein operates within cofactor biosynthesis; molybdopterin biosynthesis. In terms of biological role, sulfurates the molybdenum cofactor. Sulfation of molybdenum is essential for xanthine dehydrogenase (XDH) and aldehyde oxidase (ADO) enzymes in which molybdenum cofactor is liganded by 1 oxygen and 1 sulfur atom in active form. The chain is Molybdenum cofactor sulfurase from Drosophila willistoni (Fruit fly).